The sequence spans 443 residues: Phosphoribosylamine--glycine ligase (443 aa).

The 216-residue stretch at 109–324 (RNLFKKYNIK…FLDVCFGISN (216 aa)) folds into the ATP-grasp domain. 140-202 (MTGLGKDVVV…EEKLVGVEFT (63 aa)) is a binding site for ATP. Glutamine 282, glutamate 294, and asparagine 296 together coordinate Mg(2+). 3 residues coordinate Mn(2+): glutamine 282, glutamate 294, and asparagine 296.

The protein belongs to the GARS family. Mg(2+) is required as a cofactor. Mn(2+) serves as cofactor.

The enzyme catalyses 5-phospho-beta-D-ribosylamine + glycine + ATP = N(1)-(5-phospho-beta-D-ribosyl)glycinamide + ADP + phosphate + H(+). It functions in the pathway purine metabolism; IMP biosynthesis via de novo pathway; N(1)-(5-phospho-D-ribosyl)glycinamide from 5-phospho-alpha-D-ribose 1-diphosphate: step 2/2. This Methanococcus vannielii (strain ATCC 35089 / DSM 1224 / JCM 13029 / OCM 148 / SB) protein is Phosphoribosylamine--glycine ligase.